A 593-amino-acid polypeptide reads, in one-letter code: Transmembrane 9 superfamily member 4 (593 aa).

Positions 1-25 (MVLLPSMTSLLLVFLFLYGVSPVIS) are cleaved as a signal peptide. The Lumenal portion of the chain corresponds to 26–230 (DGSDHRYKVG…SMPHHLEIHW (205 aa)). The helical transmembrane segment at 231-251 (FSIINSCVTVLLLTGFLATIL) threads the bilayer. At 252-303 (MRVLKNDFVKYAHDEEAVDDQEETGWKLIHGDVFRFPKHKSLLAAALGSGTQ) the chain is on the cytoplasmic side. A helical transmembrane segment spans residues 304–324 (LFTLAVFIFMLALVGVFYPYN). At 325–326 (RG) the chain is on the lumenal side. The helical transmembrane segment at 327 to 347 (ALFTALVVIYALTSGIAGYTA) threads the bilayer. Residues 348–366 (ASFYCQLEGTNWVRNVILT) lie on the Cytoplasmic side of the membrane. Residues 367 to 387 (GSLFCGPLLITFSFLNTVAIA) form a helical membrane-spanning segment. The Lumenal segment spans residues 388 to 398 (YQATAALPFGT). Residues 399–419 (IVVIFLIWALVTSPLLILGGI) traverse the membrane as a helical segment. Residues 420-453 (AGKNRKSEFQAPCRTTKYPREIPPMRWYRRTLPQ) lie on the Cytoplasmic side of the membrane. A helical membrane pass occupies residues 454 to 474 (MAMAGFLPFSAIYIELYYIFA). Residues 475–486 (SVWGHRIYTIYS) lie on the Lumenal side of the membrane. The helical transmembrane segment at 487–507 (ILSIVFLILVIVTAFITVALT) threads the bilayer. At 508–522 (YFQLAAEDHEWWWRS) the chain is on the cytoplasmic side. Residues 523–543 (LLCGGSTGLFIYAYCLYYYYA) form a helical membrane-spanning segment. At 544–554 (RSDMSGFMQTS) the chain is on the lumenal side. Residues 555–575 (FFFGYMACICYGFFLMLGTIG) form a helical membrane-spanning segment. Residues 576–593 (FCASLLFVRHIYRSIKCE) lie on the Cytoplasmic side of the membrane. An Endoplasmic reticulum export signal motif is present at residues 582–587 (FVRHIY). The Golgi retention signal signature appears at 591–593 (KCE).

This sequence belongs to the nonaspanin (TM9SF) (TC 9.A.2) family.

The protein resides in the endosome membrane. The protein localises to the golgi apparatus membrane. This chain is Transmembrane 9 superfamily member 4, found in Arabidopsis thaliana (Mouse-ear cress).